Consider the following 215-residue polypeptide: Ribosome maturation factor RimP (215 aa).

A disordered region spans residues 180–215; that stretch reads KDNRARKEAKKRRGEPDDDVPEGAEADATEEHEQES. Acidic residues predominate over residues 195–207; that stretch reads PDDDVPEGAEADA.

The protein belongs to the RimP family.

It is found in the cytoplasm. Its function is as follows. Required for maturation of 30S ribosomal subunits. The chain is Ribosome maturation factor RimP from Mesorhizobium japonicum (strain LMG 29417 / CECT 9101 / MAFF 303099) (Mesorhizobium loti (strain MAFF 303099)).